An 881-amino-acid polypeptide reads, in one-letter code: Phosphoinositide 3-kinase regulatory subunit 5 (881 aa).

Residues 23–99 (SRDAVSSRWA…APHIPPDSEL (77 aa)) are heterodimerization. Disordered stretches follow at residues 312–339 (PVAS…ERDS) and 472–499 (PQAK…KLQT). Positions 316–330 (ENEEDEEEEEEDVET) are enriched in acidic residues. The interaction with G beta gamma proteins stretch occupies residues 657–757 (PILADMILYY…WNDVEKVCTS (101 aa)).

Heterodimer. Interacts with a catalytic subunit and with G beta gamma proteins.

The protein resides in the nucleus. Its subcellular location is the cytoplasm. It is found in the cell membrane. Greatly activated by G gamma proteins. Its function is as follows. Regulatory subunit of the PI3K gamma complex. In Gallus gallus (Chicken), this protein is Phosphoinositide 3-kinase regulatory subunit 5 (PIK3R5).